A 207-amino-acid chain; its full sequence is Carbonic anhydrase 2 (207 aa).

C51, D53, H104, and C107 together coordinate Zn(2+).

It belongs to the beta-class carbonic anhydrase family. Zn(2+) is required as a cofactor.

The enzyme catalyses hydrogencarbonate + H(+) = CO2 + H2O. Functionally, catalyzes the reversible hydration of carbon dioxide to form bicarbonate. The protein is Carbonic anhydrase 2 (mtcA2) of Mycobacterium tuberculosis (strain CDC 1551 / Oshkosh).